The primary structure comprises 370 residues: Prolactin-releasing peptide receptor (370 aa).

Over 1 to 62 (MASSTTRGPR…LQLVHQLKGL (62 aa)) the chain is Extracellular. N-linked (GlcNAc...) asparagine glycans are attached at residues N27 and N36. A helical membrane pass occupies residues 63–83 (IVLLYSVVVVVGLVGNCLLVL). Topologically, residues 84 to 101 (VIARVRRLHNVTNFLIGN) are cytoplasmic. A helical membrane pass occupies residues 102-122 (LALSDVLMCTACVPLTLAYAF). Residues 123 to 126 (EPRG) are Extracellular-facing. A helical transmembrane segment spans residues 127–147 (WVFGGGLCHLVFFLQPVTVYV). Residues C134 and C211 are joined by a disulfide bond. Residues 148-175 (SVFTLTTIAVDRYVVLVHPLRRRISLRL) lie on the Cytoplasmic side of the membrane. A helical transmembrane segment spans residues 176 to 196 (SAYAVLAIWALSAVLALPAAV). Residues 197–225 (HTYHVELKPHDVRLCEEFWGSQERQRQLY) are Extracellular-facing. A helical membrane pass occupies residues 226–246 (AWGLLLVTYLLPLLVILLSYV). Over 247–276 (RVSVKLRNRVVPGCVTQSQADWDRARRRRT) the chain is Cytoplasmic. A helical transmembrane segment spans residues 277-297 (FCLLVVIVVVFAVCWLPLHVF). Residues 298–317 (NLLRDLDPHAIDPYAFGLVQ) are Extracellular-facing. The chain crosses the membrane as a helical span at residues 318-338 (LLCHWLAMSSACYNPFIYAWL). Topologically, residues 339 to 369 (HDSFREELRKLLVAWPRKIAPHGQNMTVSVV) are cytoplasmic. The required for interaction with GRIP1, GRIP2 and PICK1 stretch occupies residues 365–370 (TVSVVI).

The protein belongs to the G-protein coupled receptor 1 family. Interacts through its C-terminal region with the PDZ domain-containing proteins GRIP1, GRIP2 and PICK1. Interacts with PDZ domains 4 and 5 of GRIP1 and with the PDZ domain of PICK1. In terms of tissue distribution, only detected in the pituitary gland and in all cell types of pituitary adenomas.

The protein resides in the cell membrane. In terms of biological role, receptor for prolactin-releasing peptide (PrRP). Implicated in lactation, regulation of food intake and pain-signal processing. The chain is Prolactin-releasing peptide receptor (PRLHR) from Homo sapiens (Human).